Here is a 240-residue protein sequence, read N- to C-terminus: NADPH-flavin oxidoreductase (240 aa).

Residues 11–15 (HRSIR), S39, 67–69 (QAY), 128–131 (YIGG), and 167–169 (KPR) contribute to the FMN site.

This sequence belongs to the flavin oxidoreductase frp family. As to quaternary structure, homodimer.

It carries out the reaction FMNH2 + NADP(+) = FMN + NADPH + 2 H(+). Catalyzes the NADPH-dependent reduction of FMN to FMNH(2). Involved in bioluminescence by providing FMNH(2) to luciferase. This Vibrio harveyi (Beneckea harveyi) protein is NADPH-flavin oxidoreductase.